A 528-amino-acid chain; its full sequence is uncharacterized protein (528 aa).

This is an uncharacterized protein from Giardia intestinalis (Giardia lamblia).